Reading from the N-terminus, the 252-residue chain is Probable ABC transporter ATP-binding protein p29 (252 aa).

One can recognise an ABC transporter domain in the interval 8 to 252 (LEIKNLTFKN…NILDQVFKND (245 aa)). 42–49 (GSSGQGKS) contacts ATP.

The protein belongs to the ABC transporter superfamily.

Part of a high-affinity transport system. The polypeptide is Probable ABC transporter ATP-binding protein p29 (Mesomycoplasma hyorhinis (Mycoplasma hyorhinis)).